We begin with the raw amino-acid sequence, 617 residues long: Manganese lipoxygenase (617 aa).

A signal peptide spans 1 to 17 (MRIGLLAFAVAARYVEA). The span at 23–48 (GEEVASSSAPTTLPSTSSSSALPSPT) shows a compositional bias: low complexity. Residues 23 to 59 (GEEVASSSAPTTLPSTSSSSALPSPTKYTLPHEDPNP) form a disordered region. Residues asparagine 109, asparagine 119, and asparagine 160 are each glycosylated (N-linked (GlcNAc...) asparagine). A Lipoxygenase domain is found at 122–617 (LRDIQSHGGL…PAVNPFFLSI (496 aa)). 4 residues coordinate Mn(2+): histidine 293, histidine 297, histidine 479, and asparagine 483. N-linked (GlcNAc...) asparagine glycosylation is present at asparagine 547. Position 617 (isoleucine 617) interacts with Mn(2+).

This sequence belongs to the lipoxygenase family. Manganese lipoxygenase subfamily. Mn(2+) is required as a cofactor.

Its subcellular location is the secreted. The enzyme catalyses (9Z,12Z)-octadecadienoate + O2 = (9S)-hydroperoxy-(10E,12Z)-octadecadienoate. It carries out the reaction (9Z,12Z)-octadecadienoate + O2 = (11S)-hydroperoxy-(9Z,12Z)-octadecadienoate. The catalysed reaction is (9Z,12Z)-octadecadienoate + O2 = (13R)-hydroperoxy-(9Z,11E)-octadecadienoate. It catalyses the reaction (9Z,12Z,15Z)-octadecatrienoate + O2 = (9S)-hydroperoxy-(10E,12Z,15Z)-octadecatrienoate. The enzyme catalyses (9Z,12Z,15Z)-octadecatrienoate + O2 = (11R)-hydroperoxy-(9Z,12Z,15Z)-octadecatrienoate. It carries out the reaction (9Z,12Z,15Z)-octadecatrienoate + O2 = (13R)-hydroperoxy-(9Z,11E,15Z)-octadecatrienoate. Its function is as follows. Lipoxygenase that metabolizes linoleic and alpha-linolenic acids to 9S-, 11- and 13R-hydroperoxy fatty acids. At the end of lipoxygenation, the intermediate products 11S-HPODE and 13R-HPODE from linoleic acid are then transformed into 9S-HPODE as the final product. The intermediate product 11R-HPOTrE from alpha-linolenic acid is transformed into 9S-HPOTrE and 13R-HPOTrE as the final products. 9S-HPOTrE is further oxidized by the enzyme to 9,16-DiHOTrE as the end product. Also acts on gamma-linolenic acid producing 9-HOTrE(n-6) as the main metabolite. The sequence is that of Manganese lipoxygenase from Nakataea oryzae (Rice stem rot fungus).